We begin with the raw amino-acid sequence, 402 residues long: UDP-GlcNAc:betaGal beta-1,3-N-acetylglucosaminyltransferase 9 (402 aa).

Residues 1-10 (MRRRLRLRRD) lie on the Cytoplasmic side of the membrane. The helical; Signal-anchor for type II membrane protein transmembrane segment at 11–27 (ALLTLLLGASLGLLLYA) threads the bilayer. Residues 28–402 (QRDGAAPTAS…VAAGPFQWDS (375 aa)) lie on the Lumenal side of the membrane. Low complexity predominate over residues 32 to 47 (AAPTASAPRGRGRAAP). Positions 32–83 (AAPTASAPRGRGRAAPRPTPGPRAFQLPDAGAAPPAYEGDTPAPPTPTGPFD) are disordered.

The protein belongs to the glycosyltransferase 31 family.

It localises to the golgi apparatus membrane. This is UDP-GlcNAc:betaGal beta-1,3-N-acetylglucosaminyltransferase 9 from Homo sapiens (Human).